We begin with the raw amino-acid sequence, 131 residues long: Protein FAM107B (131 aa).

Ala-2 is modified (N-acetylalanine). Disordered regions lie at residues 39–78 (MNQK…KKKS) and 100–131 (KLQE…AQES). Lys-50 carries the post-translational modification N6-acetyllysine. Residues 52–78 (ELQKVMEKRRRDQVIKQKEEEAQKKKS) are compositionally biased toward basic and acidic residues. Positions 61-112 (RRDQVIKQKEEEAQKKKSDLEIELLKRQQKLEQLELEKQKLQEEQENAPEFV) form a coiled coil.

It belongs to the FAM107 family.

The chain is Protein FAM107B from Rattus norvegicus (Rat).